Here is a 333-residue protein sequence, read N- to C-terminus: N-acetyl-gamma-glutamyl-phosphate reductase (333 aa).

Cys-145 is an active-site residue.

This sequence belongs to the NAGSA dehydrogenase family. Type 1 subfamily.

The protein localises to the cytoplasm. The catalysed reaction is N-acetyl-L-glutamate 5-semialdehyde + phosphate + NADP(+) = N-acetyl-L-glutamyl 5-phosphate + NADPH + H(+). It functions in the pathway amino-acid biosynthesis; L-arginine biosynthesis; N(2)-acetyl-L-ornithine from L-glutamate: step 3/4. Catalyzes the NADPH-dependent reduction of N-acetyl-5-glutamyl phosphate to yield N-acetyl-L-glutamate 5-semialdehyde. In Salinispora tropica (strain ATCC BAA-916 / DSM 44818 / JCM 13857 / NBRC 105044 / CNB-440), this protein is N-acetyl-gamma-glutamyl-phosphate reductase.